The chain runs to 84 residues: MITVNCIKLKQAFEQAKILKNDPYDFALAMTHFYLSNEGLETPTGYSVPSSELKELIKKNELLIHYILDEGEDFMEACEKVHGS.

This is an uncharacterized protein from Acidianus convivator (ATV).